Reading from the N-terminus, the 179-residue chain is Large ribosomal subunit protein uL5 (179 aa).

It belongs to the universal ribosomal protein uL5 family. In terms of assembly, part of the 50S ribosomal subunit; part of the 5S rRNA/L5/L18/L25 subcomplex. Contacts the 5S rRNA and the P site tRNA. Forms a bridge to the 30S subunit in the 70S ribosome.

This is one of the proteins that bind and probably mediate the attachment of the 5S RNA into the large ribosomal subunit, where it forms part of the central protuberance. In the 70S ribosome it contacts protein S13 of the 30S subunit (bridge B1b), connecting the 2 subunits; this bridge is implicated in subunit movement. Contacts the P site tRNA; the 5S rRNA and some of its associated proteins might help stabilize positioning of ribosome-bound tRNAs. The chain is Large ribosomal subunit protein uL5 from Pseudomonas syringae pv. tomato (strain ATCC BAA-871 / DC3000).